The following is a 456-amino-acid chain: Signal transduction histidine-protein kinase ArlS (456 aa).

The next 2 helical transmembrane spans lie at leucine 13–phenylalanine 33 and isoleucine 157–phenylalanine 177. The HAMP domain maps to serine 179–asparagine 232. Residues aspartate 240–asparagine 456 enclose the Histidine kinase domain. Histidine 243 bears the Phosphohistidine; by autocatalysis mark.

In terms of processing, autophosphorylated.

Its subcellular location is the cell membrane. It carries out the reaction ATP + protein L-histidine = ADP + protein N-phospho-L-histidine.. Its function is as follows. Member of the two-component regulatory system ArlS/ArlR. ArlS probably functions as a sensor protein kinase which is autophosphorylated at a histidine residue and transfers its phosphate group to ArlR. This chain is Signal transduction histidine-protein kinase ArlS (arlS), found in Staphylococcus epidermidis (strain ATCC 35984 / DSM 28319 / BCRC 17069 / CCUG 31568 / BM 3577 / RP62A).